Reading from the N-terminus, the 345-residue chain is NADH-quinone oxidoreductase subunit H (345 aa).

The next 8 helical transmembrane spans lie at Ala-9–Ala-29, Val-82–Val-102, Val-108–Gly-128, Met-154–Val-174, Leu-183–Phe-203, Tyr-241–Val-261, Leu-282–Val-302, and Ile-325–Leu-345.

The protein belongs to the complex I subunit 1 family. In terms of assembly, NDH-1 is composed of 14 different subunits. Subunits NuoA, H, J, K, L, M, N constitute the membrane sector of the complex.

It is found in the cell inner membrane. The enzyme catalyses a quinone + NADH + 5 H(+)(in) = a quinol + NAD(+) + 4 H(+)(out). Functionally, NDH-1 shuttles electrons from NADH, via FMN and iron-sulfur (Fe-S) centers, to quinones in the respiratory chain. The immediate electron acceptor for the enzyme in this species is believed to be ubiquinone. Couples the redox reaction to proton translocation (for every two electrons transferred, four hydrogen ions are translocated across the cytoplasmic membrane), and thus conserves the redox energy in a proton gradient. This subunit may bind ubiquinone. The protein is NADH-quinone oxidoreductase subunit H of Salinibacter ruber (strain DSM 13855 / M31).